The sequence spans 404 residues: Odorant receptor 67c (404 aa).

At 1 to 45 the chain is on the cytoplasmic side; it reads METAKDNTARTFMELMRVPVQFYRTIGEDIYAHRSTNPLKSLLFK. A helical transmembrane segment spans residues 46-66; sequence IYLYAGFINFNLLVIGELVFF. Residues 67–79 lie on the Extracellular side of the membrane; it reads YNSIQDFETIRLA. Residues 80 to 100 form a helical membrane-spanning segment; it reads IAVAPCIGFSLVADFKQAAMI. At 101–139 the chain is on the cytoplasmic side; sequence RGKKTLIMLLDDLENMHPKTLAKQMEYKLPDFEKTMKRV. Residues 140-160 traverse the membrane as a helical segment; sequence INIFTFLCLAYTTTFSFYPAI. Topologically, residues 161 to 204 are extracellular; that stretch reads KASVKFNFLGYDTFDRNFGFLIWFPFDATRNNLIYWIMYWDIAH. Residues 205–225 form a helical membrane-spanning segment; it reads GAYLAGIAFLCADLLLVVVIT. The Cytoplasmic segment spans residues 226-277; it reads QICMHFNYISMRLEDHPCNSNEDKENIEFLIGIIRYHDKCLKLCEHVNDLYS. The chain crosses the membrane as a helical span at residues 278–298; the sequence is FSLLLNFLMASMQICFIAFQV. Topologically, residues 299–304 are extracellular; that stretch reads TESTVE. A helical transmembrane segment spans residues 305–326; that stretch reads VIIIYCIFLMTSMVQVFMVCYY. At 327–373 the chain is on the cytoplasmic side; it reads GDTLIAASLKVGDAAYNQKWFQCSKSYCTMLKLLIMRSQKPASIRPP. Residues 374 to 394 traverse the membrane as a helical segment; that stretch reads TFPPISLVTYMKVISMSYQFF. At 395-404 the chain is on the extracellular side; sequence ALLRTTYSNN.

Belongs to the insect chemoreceptor superfamily. Heteromeric odorant receptor channel (TC 1.A.69) family. Or49a subfamily. In terms of assembly, interacts with Orco. Complexes exist early in the endomembrane system in olfactory sensory neurons (OSNs), coupling these complexes to the conserved ciliary trafficking pathway. In terms of tissue distribution, expressed in olfactory sensory neurons in the antenna.

It localises to the cell membrane. In terms of biological role, odorant receptor which mediates acceptance or avoidance behavior, depending on its substrates. The odorant receptor repertoire encodes a large collection of odor stimuli that vary widely in identity, intensity, and duration. May form a complex with Orco to form odorant-sensing units, providing sensitive and prolonged odorant signaling and calcium permeability. The chain is Odorant receptor 67c (Or67c) from Drosophila melanogaster (Fruit fly).